The following is a 72-amino-acid chain: Large ribosomal subunit protein bL31 (72 aa).

Zn(2+)-binding residues include Cys16, Cys18, Cys37, and Cys40.

The protein belongs to the bacterial ribosomal protein bL31 family. Type A subfamily. Part of the 50S ribosomal subunit. Requires Zn(2+) as cofactor.

In terms of biological role, binds the 23S rRNA. The sequence is that of Large ribosomal subunit protein bL31 from Idiomarina loihiensis (strain ATCC BAA-735 / DSM 15497 / L2-TR).